The following is a 386-amino-acid chain: L-lactate oxidase (386 aa).

The FMN hydroxy acid dehydrogenase domain maps to 16–382; that stretch reads AQAPFPICFA…RTITLVKNDG (367 aa). Residue Tyr42 participates in pyruvate binding. FMN is bound by residues 95–97, Ser124, and Gln146; that span reads PVG. Tyr148 contributes to the pyruvate binding site. Thr174 lines the FMN pocket. Pyruvate is bound at residue Arg183. FMN is bound by residues Lys253 and Ser275. Pyruvate is bound by residues His277 and Arg280. The active-site Proton acceptor is His277. Residues 308–312 and Arg332 each bind FMN; that span reads DSGVY.

This sequence belongs to the FMN-dependent alpha-hydroxy acid dehydrogenase family. As to quaternary structure, homotetramer. Requires FMN as cofactor.

The enzyme catalyses a (2S)-2-hydroxycarboxylate + O2 = a 2-oxocarboxylate + H2O2. It carries out the reaction (S)-lactate + O2 = pyruvate + H2O2. It catalyses the reaction 2-hydroxyoctanoate + O2 = 2-oxooctanoate + H2O2. The catalysed reaction is mandelate + O2 = phenylglyoxylate + H2O2. The enzyme catalyses 2-hydroxyoctadecanoate + O2 = 2-oxooctadecanoate + H2O2. It carries out the reaction (S)-2-hydroxyglutarate + O2 = H2O2 + 2-oxoglutarate. Functionally, oxidase that catalyzes the oxidation of a broad range of 2-hydroxyacids in vitro, such as (S)-lactate, 2-hydroxyoctanoate, mandelate, 2-hydroxyoctadecanoate and (S)-2-hydroxyglutarate, to the corresponding 2-oxoacids, with a reduction of O2 to H2O2. May be involved in the utilization of L-lactate as an energy source for growth. The chain is L-lactate oxidase from Lysinibacillus sphaericus (strain C3-41).